We begin with the raw amino-acid sequence, 367 residues long: MTQTLVVKIGTSSLTHPKTGDLSLSTIAVLVETLSKLRRQGQRIVLVSSGAVGVGCGRLGLSERPRTMALKQAVAAVGQGRLMRIYDDFFTTLNQPIAQVLLTRGDLVQRQRYLNAYNTFQELFNLGVIPIVNENDTVAVDELKFGDNDTLSALVASLVEADWLFLLTDVDRLYSADPRQQPDAQPISVVNSIEELAQVQVGDRGSIWGTGGMATKITAAEIAGEAGVRTVITEGRSPVNIERILAGEALGTQFEPQPRPINARKRWIAHALVPTGKLYLDRGAVQAIAQLGKSLLAAGIVQVEGVFQSQDAVLLCDRAGQEIGRGLVNYNSQELEKIQGRRSEEIPTILGYSGAETVVHRDNLVLS.

K8 is an ATP binding site. The substrate site is built by S49, D136, and N148. Residues 168-169 (TD) and 210-216 (TGGMATK) each bind ATP. The 79-residue stretch at 275–353 (TGKLYLDRGA…EEIPTILGYS (79 aa)) folds into the PUA domain.

It belongs to the glutamate 5-kinase family.

It localises to the cytoplasm. It catalyses the reaction L-glutamate + ATP = L-glutamyl 5-phosphate + ADP. It functions in the pathway amino-acid biosynthesis; L-proline biosynthesis; L-glutamate 5-semialdehyde from L-glutamate: step 1/2. In terms of biological role, catalyzes the transfer of a phosphate group to glutamate to form L-glutamate 5-phosphate. This is Glutamate 5-kinase from Cyanothece sp. (strain PCC 7425 / ATCC 29141).